We begin with the raw amino-acid sequence, 495 residues long: uncharacterized protein (495 aa).

Ser16, Glu36, Trp45, Asp56, Tyr62, and Val105 together coordinate FAD.

This sequence belongs to the FAD-binding monooxygenase family. FAD serves as cofactor.

This is an uncharacterized protein from Mycobacterium tuberculosis (strain CDC 1551 / Oshkosh).